The following is a 356-amino-acid chain: MRVTDFSFELPESLIAHYPMPERSSCRLLSLDGPTGALTHGTFTDLLDKLNPGDLLVFNNTRVIPARLFGRKASGGKIEVLVERMLDDKRILAHIRASKAPKPGAELLLGDDESINATMTARHGALFEVEFNDDRSVLDILNSIGHMPLPPYIDRPDEDADRELYQTVYSEKPGAVAAPTAGLHFDEPLLEKLRAKGVEMAFVTLHVGAGTFQPVRVDTIEDHIMHSEYAEVPQDVVDAVLAAKARGNRVIAVGTTSVRSLESAAQAAKNDLIEPFFDDTQIFIYPGFQYKVVDALVTNFHLPESTLIMLVSAFAGYQHTMNAYKAAVEEKYRFFSYGDAMFITYNPQAINERVGE.

The protein belongs to the QueA family. In terms of assembly, monomer.

Its subcellular location is the cytoplasm. It catalyses the reaction 7-aminomethyl-7-carbaguanosine(34) in tRNA + S-adenosyl-L-methionine = epoxyqueuosine(34) in tRNA + adenine + L-methionine + 2 H(+). It participates in tRNA modification; tRNA-queuosine biosynthesis. Transfers and isomerizes the ribose moiety from AdoMet to the 7-aminomethyl group of 7-deazaguanine (preQ1-tRNA) to give epoxyqueuosine (oQ-tRNA). This is S-adenosylmethionine:tRNA ribosyltransferase-isomerase from Escherichia coli (strain 55989 / EAEC).